Consider the following 419-residue polypeptide: Acetylornithine aminotransferase (419 aa).

Pyridoxal 5'-phosphate-binding positions include 116-117 (GA) and Phe-149. Arg-152 lines the N(2)-acetyl-L-ornithine pocket. Residue 240–243 (DEVQ) coordinates pyridoxal 5'-phosphate. At Lys-269 the chain carries N6-(pyridoxal phosphate)lysine. N(2)-acetyl-L-ornithine is bound at residue Ser-296. Thr-297 lines the pyridoxal 5'-phosphate pocket.

The protein belongs to the class-III pyridoxal-phosphate-dependent aminotransferase family. ArgD subfamily. In terms of assembly, homodimer. The cofactor is pyridoxal 5'-phosphate.

The protein resides in the cytoplasm. The enzyme catalyses N(2)-acetyl-L-ornithine + 2-oxoglutarate = N-acetyl-L-glutamate 5-semialdehyde + L-glutamate. It participates in amino-acid biosynthesis; L-arginine biosynthesis; N(2)-acetyl-L-ornithine from L-glutamate: step 4/4. The sequence is that of Acetylornithine aminotransferase from Prochlorococcus marinus (strain SARG / CCMP1375 / SS120).